Consider the following 349-residue polypeptide: S-adenosylmethionine:tRNA ribosyltransferase-isomerase (349 aa).

The protein belongs to the QueA family. In terms of assembly, monomer.

The protein localises to the cytoplasm. The enzyme catalyses 7-aminomethyl-7-carbaguanosine(34) in tRNA + S-adenosyl-L-methionine = epoxyqueuosine(34) in tRNA + adenine + L-methionine + 2 H(+). It functions in the pathway tRNA modification; tRNA-queuosine biosynthesis. Functionally, transfers and isomerizes the ribose moiety from AdoMet to the 7-aminomethyl group of 7-deazaguanine (preQ1-tRNA) to give epoxyqueuosine (oQ-tRNA). The protein is S-adenosylmethionine:tRNA ribosyltransferase-isomerase of Ruegeria pomeroyi (strain ATCC 700808 / DSM 15171 / DSS-3) (Silicibacter pomeroyi).